Here is a 215-residue protein sequence, read N- to C-terminus: LexA repressor (215 aa).

Positions 29–49 form a DNA-binding region, H-T-H motif; it reads VREICSAVGFKSTSTVHSYLQ. Active-site for autocatalytic cleavage activity residues include S138 and K175.

The protein belongs to the peptidase S24 family. As to quaternary structure, homodimer.

The enzyme catalyses Hydrolysis of Ala-|-Gly bond in repressor LexA.. Its function is as follows. Represses a number of genes involved in the response to DNA damage (SOS response), including recA and lexA. In the presence of single-stranded DNA, RecA interacts with LexA causing an autocatalytic cleavage which disrupts the DNA-binding part of LexA, leading to derepression of the SOS regulon and eventually DNA repair. This Ruminiclostridium cellulolyticum (strain ATCC 35319 / DSM 5812 / JCM 6584 / H10) (Clostridium cellulolyticum) protein is LexA repressor.